The primary structure comprises 279 residues: Energy-coupling factor transporter ATP-binding protein EcfA1 (279 aa).

An ABC transporter domain is found at 8-240 (IKFENVSFSY…KQFLRDINLD (233 aa)). 41–48 (GHNGSGKS) provides a ligand contact to ATP.

It belongs to the ABC transporter superfamily. Energy-coupling factor EcfA family. As to quaternary structure, forms a stable energy-coupling factor (ECF) transporter complex composed of 2 membrane-embedded substrate-binding proteins (S component), 2 ATP-binding proteins (A component) and 2 transmembrane proteins (T component).

It localises to the cell membrane. Its function is as follows. ATP-binding (A) component of a common energy-coupling factor (ECF) ABC-transporter complex. Unlike classic ABC transporters this ECF transporter provides the energy necessary to transport a number of different substrates. The protein is Energy-coupling factor transporter ATP-binding protein EcfA1 of Mycoplasmoides gallisepticum (strain R(low / passage 15 / clone 2)) (Mycoplasma gallisepticum).